A 66-amino-acid polypeptide reads, in one-letter code: MKPSEIREMSIEEIDKKIRELRLELAKERAVLTMGASLENPMVIRNIRRDIARLLTIKKEKLREKR.

The protein belongs to the universal ribosomal protein uL29 family.

This is Large ribosomal subunit protein uL29 from Thermococcus onnurineus (strain NA1).